Consider the following 623-residue polypeptide: Protein Atg16l2 (623 aa).

The span at 64 to 79 (PKDAISTRHEDWREEV) shows a compositional bias: basic and acidic residues. The disordered stretch occupies residues 64–93 (PKDAISTRHEDWREEVSGTGPDQVSSPASL). A coiled-coil region spans residues 116-229 (VKKSAALDTL…ANQALVSQEL (114 aa)). WD repeat units follow at residues 338–377 (AHLSEVNAVCFGPNSSLLATGGADRLIHLWNVVGGRLEAN), 382–421 (GAGGSITSVDFDPSGSQVLAATYNQAAQLWKVGETQSKET), 424–458 (GHKDKVTAAKFKLTRHQAVTGSRDRTVKEWDLGRA), 459–502 (YCSR…CIQV), 504–543 (PVQGRVTSLHLSYDQLHLLSCSRDNTLKVIDLRISNIRQV), 550–589 (KCSSDWTKAVFSPDRSYALAGSSNGDLYIWDVNTGKLETS), and 593–623 (PHCTAVNAVAWCFSGNHVVSVDQGRKVVLWH).

Belongs to the WD repeat ATG16 family. In terms of assembly, homooligomer. Heterooligomer with ATG16L2. Interacts with ATG5. Self-oligomerizes to form a 800-kDa complex composed of ATG12-ATG5 and ATG16L2. Interacts with RAB33B. In terms of tissue distribution, widely expressed.

It is found in the cytoplasm. It localises to the cytosol. May play a role in regulating epithelial homeostasis in an ATG16L1-dependent manner. In Mus musculus (Mouse), this protein is Protein Atg16l2 (Atg16l2).